The following is a 376-amino-acid chain: UDP-4-amino-4,6-dideoxy-N-acetyl-beta-L-altrosamine transaminase (376 aa).

Substrate-binding positions include Tyr4, 24–27 (EILT), Ala54, and Ser176. Lys181 is modified (N6-(pyridoxal phosphate)lysine). Substrate-binding positions include Asn226 and 311 to 314 (QVHY).

This sequence belongs to the DegT/DnrJ/EryC1 family.

It catalyses the reaction UDP-4-amino-4,6-dideoxy-N-acetyl-beta-L-altrosamine + 2-oxoglutarate = UDP-2-acetamido-2,6-dideoxy-beta-L-arabino-hex-4-ulose + L-glutamate. Its function is as follows. Catalyzes the second step in the biosynthesis of pseudaminic acid, a sialic-acid-like sugar that is used to modify flagellin. Uses UDP-2-acetamido-2,6-dideoxy-beta-L-arabino-4-hexulose as substrate producing UDP-4-amino-4,6-dideoxy-beta-L-AltNAc. This is UDP-4-amino-4,6-dideoxy-N-acetyl-beta-L-altrosamine transaminase (pseC) from Campylobacter jejuni subsp. jejuni serotype O:23/36 (strain 81-176).